A 277-amino-acid polypeptide reads, in one-letter code: Large ribosomal subunit protein uL15c (277 aa).

The N-terminal 67 residues, methionine 1–glutamine 67, are a transit peptide targeting the chloroplast. N-acetylthreonine is present on threonine 68. The interval phenylalanine 81 to glycine 125 is disordered. Basic residues predominate over residues serine 92–arginine 101. The span at isoleucine 103–methionine 115 shows a compositional bias: gly residues.

It belongs to the universal ribosomal protein uL15 family. Part of the 50S ribosomal subunit.

The protein resides in the plastid. The protein localises to the chloroplast. The chain is Large ribosomal subunit protein uL15c (RPL15) from Arabidopsis thaliana (Mouse-ear cress).